The sequence spans 818 residues: Piwi-like protein (818 aa).

Residues 220–339 (RINRVLNDNS…ITGELCFLCG (120 aa)) enclose the PAZ domain. The region spanning 501 to 800 (KIALVFVPDD…LAELIGKVHK (300 aa)) is the Piwi domain.

It belongs to the argonaute family. Piwi subfamily.

The polypeptide is Piwi-like protein (iwi) (Dugesia japonica (Planarian)).